We begin with the raw amino-acid sequence, 273 residues long: MADFAKLYNDPILSKKRIGSVEDPYLTYNETLTIFNGRALLTEIPNREFRVEVTGDNKEWREIEDGELDDNYFKVDYLMGVVFFNASNEGKSLTFNYSGEGASFFPASRIWIKRQGNMVIETLQGLIDEAEDTIIRMNERIAECERVTKRCQEVTAWCRQATSNYEEVVENTRKIYKPSVYTYSDIFTYYPTPQIGWTVTVKETKIVYRWDGFEWVDIGTSEVYEGFNILLSATEPFNANYIWYKDASFSPEKKRVVVSDTAPDSGQVWYKTD.

The stretch at 119 to 149 (VIETLQGLIDEAEDTIIRMNERIAECERVTK) forms a coiled coil.

The protein is SPbeta prophage-derived uncharacterized protein YomF (yomF) of Bacillus subtilis (strain 168).